A 123-amino-acid polypeptide reads, in one-letter code: Small ribosomal subunit protein uS12c (123 aa).

Positions 103 to 123 (AAGVKNRKQSRSKYGAKKPKE) are disordered. Residues 107–123 (KNRKQSRSKYGAKKPKE) are compositionally biased toward basic residues.

The protein belongs to the universal ribosomal protein uS12 family. In terms of assembly, part of the 30S ribosomal subunit.

The protein localises to the plastid. It is found in the chloroplast. Functionally, with S4 and S5 plays an important role in translational accuracy. Located at the interface of the 30S and 50S subunits. The protein is Small ribosomal subunit protein uS12c (rps12) of Guillardia theta (Cryptophyte).